We begin with the raw amino-acid sequence, 322 residues long: Protein prune homolog 2 (322 aa).

Residues 1–110 form a disordered region; it reads MDIHFEEGVL…SIPEYTAEEE (110 aa). A compositionally biased stretch (polar residues) spans 40–52; that stretch reads PNINLSLDQSEGS. A compositionally biased stretch (acidic residues) spans 57-80; that stretch reads DNLDSPDEIDINVDELDTPDEADS. The region spanning 130–291 is the CRAL-TRIO domain; it reads DMKVIEPYRR…SIIKYDEEKS (162 aa).

The protein localises to the cytoplasm. May play an important role in regulating differentiation, survival and aggressiveness of the tumor cells. The chain is Protein prune homolog 2 (Prune2) from Rattus norvegicus (Rat).